Consider the following 870-residue polypeptide: Lysosomal cholesterol signaling protein (870 aa).

At Met-1–Ser-38 the chain is on the lumenal side. Residues Met-1–Met-370 are PIN-like transporter. N-linked (GlcNAc...) asparagine glycosylation is found at Asn-9, Asn-15, and Asn-29. The chain crosses the membrane as a helical span at residues Ile-39–Ala-59. Phe-43 and Tyr-57 together coordinate cholesterol. Residues Gly-60–Arg-79 are Cytoplasmic-facing. Residues Phe-80 to Trp-100 traverse the membrane as a helical segment. Over Ser-101 to Tyr-104 the chain is Lumenal. A helical membrane pass occupies residues Ser-105–Ala-125. The Cytoplasmic portion of the chain corresponds to Ser-126–Lys-133. A discontinuously helical membrane pass occupies residues Ala-134–Val-154. The Lumenal portion of the chain corresponds to Glu-155–Gln-167. The helical transmembrane segment at Tyr-168–Cys-188 threads the bilayer. At Glu-189–Arg-213 the chain is on the cytoplasmic side. A discontinuously helical transmembrane segment spans residues Val-214–Asp-234. The Lumenal portion of the chain corresponds to Arg-235 to Asn-243. The discontinuously helical transmembrane segment at Phe-244–Met-264 threads the bilayer. The Cytoplasmic portion of the chain corresponds to Val-265–Lys-273. The cholesterol site is built by Gly-266, Lys-267, and Ile-268. Residues Ser-274–Cys-294 traverse the membrane as a helical segment. The Lumenal segment spans residues Arg-295–Asn-315. Asn-309 carries an N-linked (GlcNAc...) asparagine glycan. Residues Tyr-316–Phe-336 traverse the membrane as a discontinuously helical segment. At Asn-337–Gly-346 the chain is on the cytoplasmic side. The chain crosses the membrane as a helical span at residues Met-347–Phe-367. Residues Pro-368 to Asn-381 lie on the Lumenal side of the membrane. The segment at Gln-380–Leu-717 is GPCR. A glycan (N-linked (GlcNAc...) asparagine) is linked at Asn-381. The chain crosses the membrane as a helical span at residues Val-382 to Leu-402. Residues Leu-403–Leu-414 lie on the Cytoplasmic side of the membrane. Residues Thr-415–Val-435 form a helical membrane-spanning segment. Residues Lys-436–Lys-438 are Lumenal-facing. Residues Asn-439–Leu-459 traverse the membrane as a helical segment. Residues Trp-460–Pro-480 are Cytoplasmic-facing. The helical transmembrane segment at Val-481–Ile-501 threads the bilayer. Residues Thr-502–Gln-520 are Lumenal-facing. Residues Met-521–Cys-541 traverse the membrane as a helical segment. At Met-542–Leu-660 the chain is on the cytoplasmic side. Arg-657 contributes to the cholesterol binding site. A helical transmembrane segment spans residues Leu-661–Phe-681. At Asn-682–Glu-691 the chain is on the lumenal side. The helical transmembrane segment at Leu-692–Gly-712 threads the bilayer. At Leu-713 to Thr-870 the chain is on the cytoplasmic side. A DEP domain is found at Tyr-757–Gln-835.

Homodimer; via the transporter region and DEP domain. Interacts with the GATOR1 complex and prevents interaction between GATOR1 and KICSTOR; this interaction is disrupted upon cholesterol starvation.

It localises to the lysosome membrane. Functionally, cholesterol-binding protein that acts as a regulator of mTORC1 signaling pathway. Acts as a sensor of cholesterol to signal cholesterol sufficiency to mTORC1: in presence of cholesterol, binds cholesterol, leading to disruption of the interaction between the GATOR1 and KICSTOR complexes and promotion of mTORC1 signaling. Upon cholesterol starvation, GPR155/LYCHOS is unable to perturb the association between GATOR1 and KICSTOR, leading to mTORC1 signaling inhibition. Binds indole-3-acetic acid and may play a role in tryptophan metabolism. This is Lysosomal cholesterol signaling protein from Homo sapiens (Human).